A 269-amino-acid chain; its full sequence is Probable molybdenum ABC transporter permease protein HVO_B0370 (269 aa).

6 consecutive transmembrane segments (helical) span residues 26–46 (LLLAGVLLLYYLLPIGALVFA), 69–89 (VVAATLSTLVAVAFGVPLAYW), 100–120 (VILALVMLPLVLPPVVSGMLL), 140–160 (SLFGVVLAQTYVASPFLVVTA), 198–218 (ILAGVTLTFARAIGEFGATLM), and 243–263 (FPVALVLVGIAVGAILLVHAL). The 194-residue stretch at 65–258 (ATNSVVAATL…LVGIAVGAIL (194 aa)) folds into the ABC transmembrane type-1 domain.

The protein belongs to the binding-protein-dependent transport system permease family. The complex is composed of two ATP-binding proteins, two transmembrane proteins (HVO_B0370) and a solute-binding protein (HVO_B0369).

It localises to the cell membrane. Its function is as follows. Part of an ABC transporter complex involved in molybdenum import. Responsible for the translocation of the substrate across the membrane. This is Probable molybdenum ABC transporter permease protein HVO_B0370 from Haloferax volcanii (strain ATCC 29605 / DSM 3757 / JCM 8879 / NBRC 14742 / NCIMB 2012 / VKM B-1768 / DS2) (Halobacterium volcanii).